Reading from the N-terminus, the 46-residue chain is Diuretic hormone (46 aa).

Isoleucine amide is present on I46.

It belongs to the sauvagine/corticotropin-releasing factor/urotensin I family.

The protein resides in the secreted. Functionally, regulation of fluid secretion. Stimulates primary urine secretion by Malpighian tubules and causes a dose-dependent stimulation of cAMP levels in the tubules. The protein is Diuretic hormone of Locusta migratoria (Migratory locust).